The primary structure comprises 319 residues: MPYARILGTGSYLPDTILTNTELAKRVETTDEWIVSRTGIQERRLAAEGQLTSDLAYRAALRAIEAAGIEAASIEMIIVATTTPDMVFPSTAVVVQERLGLAGVPAFDVQAVCAGFMYAFATANAFIRSGQIKRALVIGAETLSRLIDWDDRRTCILFGDGAGAVVLGADEDTGILSTELRADGRYKDILKCDARPSQGVLAGNPFVYMDGQAVFKFAVKALADIAEVTLAKAGKTKADLDWLVPHQANLRIIEATARHLALPMDKVVVTLPNHANTSAASVPLALDAAVRDGRIRRGELLLLEGIGGGFAWGSALLHY.

Residues Cys-113 and His-246 contribute to the active site. The interval 247 to 251 is ACP-binding; sequence QANLR. Asn-276 is a catalytic residue.

Belongs to the thiolase-like superfamily. FabH family. In terms of assembly, homodimer.

It is found in the cytoplasm. It carries out the reaction malonyl-[ACP] + acetyl-CoA + H(+) = 3-oxobutanoyl-[ACP] + CO2 + CoA. It functions in the pathway lipid metabolism; fatty acid biosynthesis. Its function is as follows. Catalyzes the condensation reaction of fatty acid synthesis by the addition to an acyl acceptor of two carbons from malonyl-ACP. Catalyzes the first condensation reaction which initiates fatty acid synthesis and may therefore play a role in governing the total rate of fatty acid production. Possesses both acetoacetyl-ACP synthase and acetyl transacylase activities. Its substrate specificity determines the biosynthesis of branched-chain and/or straight-chain of fatty acids. This chain is Beta-ketoacyl-[acyl-carrier-protein] synthase III, found in Laribacter hongkongensis (strain HLHK9).